Consider the following 224-residue polypeptide: uncharacterized protein (224 aa).

Its function is as follows. The presence of the two linear plasmids, termed pGKL1 and pGKL2, in strains of Kluyveromyces lactis confers the killer phenotype to the host cell, by promoting the secretion of a toxin able to inhibit the growth of sensitive strains. This is an uncharacterized protein from Kluyveromyces lactis (strain ATCC 8585 / CBS 2359 / DSM 70799 / NBRC 1267 / NRRL Y-1140 / WM37) (Yeast).